The sequence spans 156 residues: Small ribosomal subunit protein uS7 (156 aa).

This sequence belongs to the universal ribosomal protein uS7 family. In terms of assembly, part of the 30S ribosomal subunit. Contacts proteins S9 and S11.

One of the primary rRNA binding proteins, it binds directly to 16S rRNA where it nucleates assembly of the head domain of the 30S subunit. Is located at the subunit interface close to the decoding center, probably blocks exit of the E-site tRNA. In Shewanella sp. (strain W3-18-1), this protein is Small ribosomal subunit protein uS7.